The primary structure comprises 84 residues: MAYQKIVFVALMLVLAVSAMRLPDQQDQDISVAKRVACKCDDDGPDIRSATLTGTVDLGSCNEGWEKCASYYTVVADCCRRPRS.

The first 19 residues, 1–19 (MAYQKIVFVALMLVLAVSA), serve as a signal peptide directing secretion. A propeptide spanning residues 20-33 (MRLPDQQDQDISVA) is cleaved from the precursor. 3 disulfide bridges follow: cysteine 38/cysteine 78, cysteine 40/cysteine 68, and cysteine 61/cysteine 79.

Belongs to the sea anemone sodium channel inhibitory toxin family. Type II subfamily.

It localises to the secreted. It is found in the nematocyst. In terms of biological role, binds specifically to the voltage-gated sodium channel (Nav) and delays its inactivation. This Heterodactyla hemprichii (Hemprich's sea anemone) protein is Delta-thalatoxin-Hhe1a.